Consider the following 154-residue polypeptide: uncharacterized protein (154 aa).

An HTH marR-type domain is found at 1 to 143; the sequence is MTESERALLT…LRKLAGSLTK (143 aa). The H-T-H motif DNA-binding region spans 57 to 80; that stretch reads LSKLAMSLDLKPASVTRMTDILYK.

This is an uncharacterized protein from Bacillus subtilis (strain 168).